A 433-amino-acid polypeptide reads, in one-letter code: MNIAVVGLSHKTAPVDVREKLSIPDDVKEKATSQLRSYPHLEEVAILSTCNRMEVYVVAQETDDGIRELTQFLSEWSQIPLLELRQHLFILLHQDAVMHLMRVSAGLDSLVLGEGQILAQVKQTHKLSQKYSGAGPILNRLFKQAISAGKRVRTETSIGTGAVSISSAAVELAQIKTEDLSAHRVAIIGAGKMSRLLVKHLLSKGANQIAILNRSLKRAEQLADQFQGADLKLHTLADMQAVLTESDLIFTSTASTEPLLDRDILEPIVCDRQSCMIFDISVPRNVHSNVNELSQVHAFNVDDLKAVVAQNQESRRQMALEAESLLEEEVASFDVWWRSLETVPTISSLRTKVESIREQELEKALSRLGTEFAEKHQEVIEALTRGIVNKILHDPMVQLRAQQDIEVRRKAMQSLNMLFNLNSSQGVAKQRNT.

Substrate-binding positions include 49–52 (TCNR), S109, 114–116 (EGQ), and Q120. C50 functions as the Nucleophile in the catalytic mechanism. 189-194 (GAGKMS) is an NADP(+) binding site.

The protein belongs to the glutamyl-tRNA reductase family. As to quaternary structure, homodimer.

The enzyme catalyses (S)-4-amino-5-oxopentanoate + tRNA(Glu) + NADP(+) = L-glutamyl-tRNA(Glu) + NADPH + H(+). It participates in porphyrin-containing compound metabolism; protoporphyrin-IX biosynthesis; 5-aminolevulinate from L-glutamyl-tRNA(Glu): step 1/2. It functions in the pathway porphyrin-containing compound metabolism; chlorophyll biosynthesis. Its function is as follows. Catalyzes the NADPH-dependent reduction of glutamyl-tRNA(Glu) to glutamate 1-semialdehyde (GSA). This Acaryochloris marina (strain MBIC 11017) protein is Glutamyl-tRNA reductase.